A 254-amino-acid polypeptide reads, in one-letter code: Dihydroorotate dehydrogenase B (NAD(+)), electron transfer subunit (254 aa).

The 99-residue stretch at 1–99 (MLQTEMKVIQ…LGPLGKGFDI (99 aa)) folds into the FAD-binding FR-type domain. FAD-binding positions include 50 to 53 (RPIS), 67 to 69 (LYR), and 74 to 75 (GT). [2Fe-2S] cluster-binding residues include cysteine 218, cysteine 223, cysteine 226, and cysteine 241.

The protein belongs to the PyrK family. As to quaternary structure, heterotetramer of 2 PyrK and 2 PyrD type B subunits. It depends on [2Fe-2S] cluster as a cofactor. The cofactor is FAD.

Its pathway is pyrimidine metabolism; UMP biosynthesis via de novo pathway; orotate from (S)-dihydroorotate (NAD(+) route): step 1/1. Responsible for channeling the electrons from the oxidation of dihydroorotate from the FMN redox center in the PyrD type B subunit to the ultimate electron acceptor NAD(+). In Listeria monocytogenes serotype 4a (strain HCC23), this protein is Dihydroorotate dehydrogenase B (NAD(+)), electron transfer subunit.